The following is a 306-amino-acid chain: tRNA dimethylallyltransferase 2 (306 aa).

11–18 (GPTASGKT) serves as a coordination point for ATP. Residue 13–18 (TASGKT) coordinates substrate. Residues 36–39 (DSRQ) are interaction with substrate tRNA.

The protein belongs to the IPP transferase family. In terms of assembly, monomer. Requires Mg(2+) as cofactor.

The catalysed reaction is adenosine(37) in tRNA + dimethylallyl diphosphate = N(6)-dimethylallyladenosine(37) in tRNA + diphosphate. Catalyzes the transfer of a dimethylallyl group onto the adenine at position 37 in tRNAs that read codons beginning with uridine, leading to the formation of N6-(dimethylallyl)adenosine (i(6)A). This is tRNA dimethylallyltransferase 2 from Bacteroides thetaiotaomicron (strain ATCC 29148 / DSM 2079 / JCM 5827 / CCUG 10774 / NCTC 10582 / VPI-5482 / E50).